The chain runs to 325 residues: Phospho-N-acetylmuramoyl-pentapeptide-transferase (325 aa).

Helical transmembrane passes span 5–25, 57–77, 81–101, 117–137, 146–166, 178–198, 200–220, 227–247, 252–272, and 304–324; these read VLLL…PIFI, LMIL…LSIF, VLLL…DDFI, LIGQ…MGLS, SLSI…LVGA, GLVA…AWAT, YFEV…FLVF, VFMG…IAIM, ILLI…IIQV, and VTFW…EVWI.

This sequence belongs to the glycosyltransferase 4 family. MraY subfamily. Mg(2+) is required as a cofactor.

It localises to the cell membrane. It catalyses the reaction UDP-N-acetyl-alpha-D-muramoyl-L-alanyl-gamma-D-glutamyl-meso-2,6-diaminopimeloyl-D-alanyl-D-alanine + di-trans,octa-cis-undecaprenyl phosphate = di-trans,octa-cis-undecaprenyl diphospho-N-acetyl-alpha-D-muramoyl-L-alanyl-D-glutamyl-meso-2,6-diaminopimeloyl-D-alanyl-D-alanine + UMP. Its pathway is cell wall biogenesis; peptidoglycan biosynthesis. In terms of biological role, catalyzes the initial step of the lipid cycle reactions in the biosynthesis of the cell wall peptidoglycan: transfers peptidoglycan precursor phospho-MurNAc-pentapeptide from UDP-MurNAc-pentapeptide onto the lipid carrier undecaprenyl phosphate, yielding undecaprenyl-pyrophosphoryl-MurNAc-pentapeptide, known as lipid I. The polypeptide is Phospho-N-acetylmuramoyl-pentapeptide-transferase (Halalkalibacterium halodurans (strain ATCC BAA-125 / DSM 18197 / FERM 7344 / JCM 9153 / C-125) (Bacillus halodurans)).